The sequence spans 221 residues: MAKNKFNHSWLHDHINDPYVKMAQREGYRARAAYKLKEIDEQDKLIRPGQVIVDLGAAPGSWSQYARNKLADSPRARDGRIDGAVVAIDLLPMEPVADVTFIQGDFREESVFRELESVVLDASGGNKIDLVLSDMAPNLSGVASADAARIEYLCDLALEFAQAHLKPEGALLVKCFHGSGYSQIVEKFKRQFKVVAKRKPKASRDKSSETFILGRYLKTVD.

The S-adenosyl-L-methionine site is built by Gly60, Trp62, Asp89, Asp105, and Asp134. The active-site Proton acceptor is Lys174.

The protein belongs to the class I-like SAM-binding methyltransferase superfamily. RNA methyltransferase RlmE family.

It localises to the cytoplasm. The enzyme catalyses uridine(2552) in 23S rRNA + S-adenosyl-L-methionine = 2'-O-methyluridine(2552) in 23S rRNA + S-adenosyl-L-homocysteine + H(+). Specifically methylates the uridine in position 2552 of 23S rRNA at the 2'-O position of the ribose in the fully assembled 50S ribosomal subunit. The sequence is that of Ribosomal RNA large subunit methyltransferase E from Cupriavidus taiwanensis (strain DSM 17343 / BCRC 17206 / CCUG 44338 / CIP 107171 / LMG 19424 / R1) (Ralstonia taiwanensis (strain LMG 19424)).